The chain runs to 539 residues: Chloride channel CLIC-like protein 1 (539 aa).

Residues 1-18 (MLCRLLLCECLLLITGYA) form the signal peptide. The Lumenal segment spans residues 19-184 (HDDDWIDPTD…EDYFGVDPYN (166 aa)). Positions 41–61 (KSQVRSGTSEKKEVSPDSSEA) are disordered. A helical membrane pass occupies residues 185-205 (VFMVLLCLLCLVVLVATELWT). Over 206-215 (YVRWYTQMKR) the chain is Cytoplasmic. The chain crosses the membrane as a helical span at residues 216 to 236 (IFIISFLLSLAWNWIYLYKMA). Topologically, residues 237–329 (FAQHQANIAG…GEFIKALMKE (93 aa)) are lumenal. The helical transmembrane segment at 330-350 (IPVLLQIPVLAILALAVLSFC) threads the bilayer. Over 351 to 539 (YGAGRSVPML…GTEPVSSPCG (189 aa)) the chain is Cytoplasmic. The segment at 361–410 (RHFGGPDREPPRALEPDDRRRQKGLDYRLHGGAGDADFSYRGPAGSIEQG) is disordered. The segment covering 364-389 (GGPDREPPRALEPDDRRRQKGLDYRL) has biased composition (basic and acidic residues). Phosphoserine is present on residues S429, S433, and S459. The tract at residues 444-539 (DTEAQEHPEV…GTEPVSSPCG (96 aa)) is disordered. Residues 475–485 (STPTEYSQSAK) are compositionally biased toward polar residues. Phosphothreonine is present on T476. S498, S513, and S521 each carry phosphoserine. The span at 512–521 (CSPPGGCPPS) shows a compositional bias: low complexity.

This sequence belongs to the chloride channel MCLC family. In terms of assembly, homomultimers. Interacts with mitochondrial protein PIGBOS1 (via C-terminus); the interaction occurs at the mitochondria-associated endoplasmic reticulum (ER) membrane, a zone of contact between the ER and mitochondrial membranes, but does not appear to play a role in ER-mitochondria tethering and is not affected by ER stress. Interacts with CALR. In terms of tissue distribution, expressed in cerebellum (at protein level).

The protein resides in the endoplasmic reticulum membrane. The enzyme catalyses chloride(in) = chloride(out). The catalysed reaction is bromide(in) = bromide(out). It catalyses the reaction nitrate(in) = nitrate(out). It carries out the reaction fluoride(in) = fluoride(out). Activated by membrane phosphatidylinositol 4,5-bisphosphate (PI(4,5)P2, PIP2). Inhibited by lumenal Ca(2+). In terms of biological role, anion-selective channel with Ca(2+)-dependent and voltage-independent gating. Permeable to small monovalent anions with selectivity for bromide &gt; chloride &gt; nitrate &gt; fluoride. Operates in the endoplasmic reticulum (ER) membrane where it mediates chloride efflux to compensate for the loss of positive charges from the ER lumen upon Ca(2+) release. Contributes to the maintenance of ER Ca(2+) pools and activation of unfolded protein response to prevent accumulation of misfolded proteins in the ER lumen. Particularly involved in ER homeostasis mechanisms underlying motor neurons and retinal photoreceptors survival. The protein is Chloride channel CLIC-like protein 1 of Mus musculus (Mouse).